The chain runs to 101 residues: UPF0235 protein MmarC6_1603 (101 aa).

Belongs to the UPF0235 family.

This chain is UPF0235 protein MmarC6_1603, found in Methanococcus maripaludis (strain C6 / ATCC BAA-1332).